We begin with the raw amino-acid sequence, 358 residues long: Aromatic amino acid aminotransferase (358 aa).

N6-(pyridoxal phosphate)lysine is present on Lys214.

It belongs to the class-II pyridoxal-phosphate-dependent aminotransferase family. Homodimer. Requires pyridoxal 5'-phosphate as cofactor.

The catalysed reaction is an aromatic L-alpha-amino acid + 2-oxoglutarate = an aromatic oxo-acid + L-glutamate. Functionally, aminotransferase that catalyzes the conversion of aromatic amino acids and 2-oxoglutarate into corresponding aromatic oxo acids and L-glutamate. This chain is Aromatic amino acid aminotransferase, found in Rhodococcus erythropolis (strain PR4 / NBRC 100887).